A 327-amino-acid polypeptide reads, in one-letter code: Ribosomal RNA small subunit methyltransferase H (327 aa).

S-adenosyl-L-methionine is bound by residues 41–43 (GGH), Asp-60, Tyr-87, Asp-108, and Gln-115. The tract at residues 292 to 327 (AERADEQETLENPRAASARLRAVERLRETTTPGSAR) is disordered.

The protein belongs to the methyltransferase superfamily. RsmH family.

The protein localises to the cytoplasm. It catalyses the reaction cytidine(1402) in 16S rRNA + S-adenosyl-L-methionine = N(4)-methylcytidine(1402) in 16S rRNA + S-adenosyl-L-homocysteine + H(+). Its function is as follows. Specifically methylates the N4 position of cytidine in position 1402 (C1402) of 16S rRNA. The sequence is that of Ribosomal RNA small subunit methyltransferase H from Kocuria rhizophila (strain ATCC 9341 / DSM 348 / NBRC 103217 / DC2201).